Here is a 433-residue protein sequence, read N- to C-terminus: Enolase (433 aa).

(2R)-2-phosphoglycerate is bound at residue glutamine 167. Catalysis depends on glutamate 209, which acts as the Proton donor. Residues aspartate 246, glutamate 291, and aspartate 318 each coordinate Mg(2+). (2R)-2-phosphoglycerate contacts are provided by lysine 343, arginine 372, serine 373, and lysine 394. Lysine 343 functions as the Proton acceptor in the catalytic mechanism.

Belongs to the enolase family. Component of the RNA degradosome, a multiprotein complex involved in RNA processing and mRNA degradation. It depends on Mg(2+) as a cofactor.

The protein localises to the cytoplasm. The protein resides in the secreted. It localises to the cell surface. It catalyses the reaction (2R)-2-phosphoglycerate = phosphoenolpyruvate + H2O. Its pathway is carbohydrate degradation; glycolysis; pyruvate from D-glyceraldehyde 3-phosphate: step 4/5. Catalyzes the reversible conversion of 2-phosphoglycerate (2-PG) into phosphoenolpyruvate (PEP). It is essential for the degradation of carbohydrates via glycolysis. This chain is Enolase, found in Pasteurella multocida (strain Pm70).